The primary structure comprises 281 residues: Pantothenate synthetase (281 aa).

ATP is bound at residue 30–37 (MGYLHDGH). His-37 (proton donor) is an active-site residue. Gln-61 contributes to the (R)-pantoate binding site. Residue Gln-61 participates in beta-alanine binding. ATP is bound at residue 147 to 150 (GEKD). Gln-153 serves as a coordination point for (R)-pantoate. ATP contacts are provided by residues Ile-176 and 184–187 (KSSR).

The protein belongs to the pantothenate synthetase family. As to quaternary structure, homodimer.

Its subcellular location is the cytoplasm. It carries out the reaction (R)-pantoate + beta-alanine + ATP = (R)-pantothenate + AMP + diphosphate + H(+). The protein operates within cofactor biosynthesis; (R)-pantothenate biosynthesis; (R)-pantothenate from (R)-pantoate and beta-alanine: step 1/1. Functionally, catalyzes the condensation of pantoate with beta-alanine in an ATP-dependent reaction via a pantoyl-adenylate intermediate. This Clostridium acetobutylicum (strain ATCC 824 / DSM 792 / JCM 1419 / IAM 19013 / LMG 5710 / NBRC 13948 / NRRL B-527 / VKM B-1787 / 2291 / W) protein is Pantothenate synthetase.